The sequence spans 815 residues: Patatin-like phospholipase domain-containing protein LELG_00944 (815 aa).

Residues 41-50 (VSTTAPTTPL) are compositionally biased toward polar residues. Disordered stretches follow at residues 41 to 105 (VSTT…PQLK) and 140 to 166 (SENLNPNSKRTKFAKSSKSSKSKSTSP). Low complexity predominate over residues 54–73 (LDMGDLSLLGGELGNGSDDV). Residues 74–94 (VVGDDDDDDDDDDDDDDDDDD) are compositionally biased toward acidic residues. Over residues 148 to 160 (KRTKFAKSSKSSK) the composition is skewed to basic residues. Residues 185–205 (WPILTFVVIWVTILGFLYLAV) traverse the membrane as a helical segment. The PNPLA domain occupies 360–552 (LCLSGGACFA…RTDIPIDALN (193 aa)). Residues 391-395 (GTSGG) carry the GXSXG motif. The active-site Nucleophile is Ser393. Catalysis depends on Asp539, which acts as the Proton acceptor. The tract at residues 753–815 (GSTLRDDDAD…LTKERRHTVY (63 aa)) is disordered. Over residues 759–799 (DDADADVDEDDNEDEDEEDEDENDYEEYDVEDLDDPYESDA) the composition is skewed to acidic residues.

This sequence belongs to the PLPL family.

Its subcellular location is the membrane. Functionally, probable lipid hydrolase. The polypeptide is Patatin-like phospholipase domain-containing protein LELG_00944 (Lodderomyces elongisporus (strain ATCC 11503 / CBS 2605 / JCM 1781 / NBRC 1676 / NRRL YB-4239) (Yeast)).